We begin with the raw amino-acid sequence, 377 residues long: Succinyl-diaminopimelate desuccinylase (377 aa).

Histidine 66 lines the Zn(2+) pocket. Residue aspartate 68 is part of the active site. Aspartate 99 lines the Zn(2+) pocket. Glutamate 133 (proton acceptor) is an active-site residue. Zn(2+) contacts are provided by glutamate 134, glutamate 162, and histidine 348.

The protein belongs to the peptidase M20A family. DapE subfamily. As to quaternary structure, homodimer. Zn(2+) serves as cofactor. The cofactor is Co(2+).

It catalyses the reaction N-succinyl-(2S,6S)-2,6-diaminopimelate + H2O = (2S,6S)-2,6-diaminopimelate + succinate. It functions in the pathway amino-acid biosynthesis; L-lysine biosynthesis via DAP pathway; LL-2,6-diaminopimelate from (S)-tetrahydrodipicolinate (succinylase route): step 3/3. Catalyzes the hydrolysis of N-succinyl-L,L-diaminopimelic acid (SDAP), forming succinate and LL-2,6-diaminopimelate (DAP), an intermediate involved in the bacterial biosynthesis of lysine and meso-diaminopimelic acid, an essential component of bacterial cell walls. The protein is Succinyl-diaminopimelate desuccinylase of Histophilus somni (strain 2336) (Haemophilus somnus).